A 607-amino-acid polypeptide reads, in one-letter code: Guanine nucleotide-binding protein-like 1 (607 aa).

Basic residues predominate over residues 1-14 (MPRKKPFSVKQKKK). Positions 1-81 (MPRKKPFSVK…GPRGYDPNRY (81 aa)) are disordered. Basic and acidic residues predominate over residues 15-26 (QLQDKRERKRGL). Serine 32, serine 33, and serine 34 each carry phosphoserine. Phosphothreonine is present on residues threonine 48 and threonine 50. Phosphoserine occurs at positions 51 and 68. In terms of domain architecture, CP-type G spans 178–418 (WRQLWRVLEM…LCDCPGLIFP (241 aa)). 225–228 (NKVD) lines the GTP pocket. A Phosphoserine modification is found at serine 324. Residues 367–374 (GFPNVGKS) and 411–415 (DCPGL) each bind GTP. The disordered stretch occupies residues 547–607 (GPAGDEEEEE…PYALLGEDEC (61 aa)). A compositionally biased stretch (acidic residues) spans 550–584 (GDEEEEEEEELSSSCEEEGEEDRDADEEGEGDEET). Phosphoserine is present on residues serine 561, serine 562, and serine 563.

Belongs to the TRAFAC class YlqF/YawG GTPase family.

In terms of biological role, possible regulatory or functional link with the histocompatibility cluster. The chain is Guanine nucleotide-binding protein-like 1 (GNL1) from Pan troglodytes (Chimpanzee).